We begin with the raw amino-acid sequence, 726 residues long: PTS system glucose-specific EIICBA component (726 aa).

The PTS EIIC type-1 domain maps to 1–453 (MMKDTFKNVL…FNYATPGRNG (453 aa)). A run of 9 helical transmembrane segments spans residues 18–38 (FGKA…MISI), 62–82 (IGWG…GGSW), 90–110 (AFAA…IFGV), 139–159 (VLEA…GFVG), 184–204 (FVPF…AAFW), 311–331 (FKVG…VAIY), 344–364 (GMMI…PIEY), 365–385 (MFMF…GAAF), and 419–439 (IVNF…IANF). Positions 473-555 (GSQAVNIINL…QDILDSGEII (83 aa)) constitute a PTS EIIB type-1 domain. C495 (phosphocysteine intermediate; for EIIB activity) is an active-site residue. In terms of domain architecture, PTS EIIA type-1 spans 596-700 (DPVFAQKMMG…ETSTVVVFTN (105 aa)). The active-site Tele-phosphohistidine intermediate; for EIIA activity is the H648.

It is found in the cell membrane. The enzyme catalyses N(pros)-phospho-L-histidyl-[protein] + D-glucose(out) = D-glucose 6-phosphate(in) + L-histidyl-[protein]. Its function is as follows. The phosphoenolpyruvate-dependent sugar phosphotransferase system (sugar PTS), a major carbohydrate active transport system, catalyzes the phosphorylation of incoming sugar substrates concomitantly with their translocation across the cell membrane. This system is involved in glucose transport. This chain is PTS system glucose-specific EIICBA component (exp5), found in Streptococcus pneumoniae serotype 4 (strain ATCC BAA-334 / TIGR4).